The primary structure comprises 124 residues: MAITKDDILEAVGAMSVMELNDLVKAFEEKFGVSAAAMAVAAAPGAGGAAAAEEQTEFNVILAEVGANKVGVIKAVREITGLGLKEAKDLVDGAPKPVKEGVDKAAAAEAKKKLEDAGAKVDVK.

It belongs to the bacterial ribosomal protein bL12 family. Homodimer. Part of the ribosomal stalk of the 50S ribosomal subunit. Forms a multimeric L10(L12)X complex, where L10 forms an elongated spine to which 2 to 4 L12 dimers bind in a sequential fashion. Binds GTP-bound translation factors.

Functionally, forms part of the ribosomal stalk which helps the ribosome interact with GTP-bound translation factors. Is thus essential for accurate translation. The polypeptide is Large ribosomal subunit protein bL12 (Cupriavidus necator (strain ATCC 17699 / DSM 428 / KCTC 22496 / NCIMB 10442 / H16 / Stanier 337) (Ralstonia eutropha)).